The following is a 404-amino-acid chain: MKARAEKIADGLYWTGVLDWDIRNYHGYTLQGTTYNAYLVFGDEGVALIDNSYPGTFQELMARMEDAFNREGREMRVDFIVQNHVERDHSGVLVELHRRFPEAEIHCTEVAVEGLLKHYPALEGTEFRTVKTGDSIDLGGRTLTFLEAPLLHWPDSMFTFLDTGILFSNDAFGQHLCYPQRLDTEIPEYILMDAAKKFYANLITPLSKLVLRKFDEVKELGLLDKIGMIAPSHGQIWTEPMKIIEAYTAWATGKVKKKVTVIYDTMHHSTAMMAHAIAEGAMSEGADVRVYYLHEDDRSEIVKDILDSHAIALGAPAIYDEPYPSVGDLLMYLRGLKFNRTGQRRAMVFGSMGGRGGATGTMQKLLADAGFDVMEADEIYYVPNNEELDACFEAGRRLAGDLNE.

Positions 84, 86, 88, 89, 152, 170, and 233 each coordinate Fe cation. Residues 259–399 (VTVIYDTMHH…ACFEAGRRLA (141 aa)) form the Flavodoxin-like domain. Residues 265-270 (TMHHST), 317-320 (AIYD), and 351-356 (SMGGRG) each bind FMN.

The protein in the N-terminal section; belongs to the zinc metallo-hydrolase group 3 family. It depends on FMN as a cofactor. Requires Fe cation as cofactor.

The enzyme catalyses 2 reduced coenzyme F420-(gamma-L-Glu)(n) + O2 = 2 oxidized coenzyme F420-(gamma-L-Glu)(n) + 2 H2O + 2 H(+). Catalyzes the oxidation of F420H(2) with O(2). May be involved in O(2) detoxification, reducing the intracellular O(2) concentration to a level allowing growth at the expense of methane formation. The sequence is that of Coenzyme F420H(2) oxidase from Methanothermobacter thermautotrophicus (strain ATCC 29096 / DSM 1053 / JCM 10044 / NBRC 100330 / Delta H) (Methanobacterium thermoautotrophicum).